A 531-amino-acid chain; its full sequence is Light-independent protochlorophyllide reductase subunit B (531 aa).

Residue D36 coordinates [4Fe-4S] cluster. Catalysis depends on D291, which acts as the Proton donor. 426-427 (GL) provides a ligand contact to substrate.

It belongs to the ChlB/BchB/BchZ family. In terms of assembly, protochlorophyllide reductase is composed of three subunits; ChlL, ChlN and ChlB. Forms a heterotetramer of two ChlB and two ChlN subunits. [4Fe-4S] cluster is required as a cofactor.

It carries out the reaction chlorophyllide a + oxidized 2[4Fe-4S]-[ferredoxin] + 2 ADP + 2 phosphate = protochlorophyllide a + reduced 2[4Fe-4S]-[ferredoxin] + 2 ATP + 2 H2O. It functions in the pathway porphyrin-containing compound metabolism; chlorophyll biosynthesis (light-independent). Component of the dark-operative protochlorophyllide reductase (DPOR) that uses Mg-ATP and reduced ferredoxin to reduce ring D of protochlorophyllide (Pchlide) to form chlorophyllide a (Chlide). This reaction is light-independent. The NB-protein (ChlN-ChlB) is the catalytic component of the complex. The polypeptide is Light-independent protochlorophyllide reductase subunit B (Prochlorococcus marinus (strain MIT 9211)).